The following is a 188-amino-acid chain: MATDQQDLDIISSTAELRGACDFWETRSGGVTTITITRINRDAIVLLAGVCPGESFSVSYNKEKILVNSYPFNINNVDVVGGTTDINDFNSKMKSLYLPVNGMTVLMLTEGRINNPEIAVVTEDGNLEVVGSKKKTLVKLLLLFLSLMVVIVGVWWKYFSTSELSASALFDTVGQSVKSKGNYEDLFK.

Residues 136–156 (TLVKLLLLFLSLMVVIVGVWW) form a helical membrane-spanning segment.

Its subcellular location is the host membrane. This is an uncharacterized protein from Magallana gigas (Pacific oyster).